The following is a 640-amino-acid chain: MRRERQRMMSFEDKDKDDLDNSNSNNSSEMTDTAMMPPLKRLLITGSSDDLAQGSSGKKKMTMATRSPSSSPDLATNDSGTRVQPLPEYNFTKFCYRHNPDIQFSPTHTACYKQDLKRTQEINANIAKLPLQEQSDIHHIISKYSNSNDKIRKLILDGILSTSCFPQLSYISSLVTHMIKIDFISILPQELSLKILSYLDCQSLCNATRVCRKWQKLADDDRVWYHMCEQHIDRKCPNCGWGLPLLHMKRARIQQNSTGSSSNADIQTQTTRPWKVIYRERFKVESNWRKGHCRIQEFKGHMDGVLTLQFNYRLLFTGSYDSTIGIWDLFTGKLIRRLSGHSDGVKTLYFDDRKLITGSLDKTIRVWNYITGECISTYRGHSDSVLSVDSYQKVIVSGSADKTVKVWHVESRTCYTLRGHTEWVNCVKLHPKSFSCFSCSDDTTIRMWDIRTNSCLKVFRGHVGQVQKIIPLTIKDVENLATDNTSDGSSPQDDPTMTDGADESDTPSNEQETVLDENIPYPTHLLSCGLDNTIKLWDVKTGKCIRTQFGHVEGVWDIAADNFRIISGSHDGSIKVWDLQSGKCMHTFNGRRLQRETQHTQTQSLGDKVAPIACVCIGDSECFSGDEFGCVKMYKFDLND.

Residues 1-19 are compositionally biased toward basic and acidic residues; it reads MRRERQRMMSFEDKDKDDL. The segment at 1–84 is disordered; the sequence is MRRERQRMMS…ATNDSGTRVQ (84 aa). Residues 1 to 299 are necessary to mediate nuclear localization; it reads MRRERQRMMS…KGHCRIQEFK (299 aa). Composition is skewed to polar residues over residues 45–56 and 64–82; these read TGSSDDLAQGSS and ATRSPSSSPDLATNDSGTR. Phosphoserine is present on Ser67. The tract at residues 180-225 is interaction with SKP1/CBF3D; it reads KIDFISILPQELSLKILSYLDCQSLCNATRVCRKWQKLADDDRVWY. The tract at residues 180 to 277 is important for mediating homomultimerization; the sequence is KIDFISILPQ…TQTTRPWKVI (98 aa). The F-box domain maps to 181-227; sequence IDFISILPQELSLKILSYLDCQSLCNATRVCRKWQKLADDDRVWYHM. Residues 277–640 form an interaction with MET4 region; sequence IYRERFKVES…VKMYKFDLND (364 aa). 8 WD repeats span residues 300–328, 340–368, 380–408, 419–449, 461–499, 509–538, 550–578, and 607–635; these read GHMDGVLTLQFNYRLLFTGSYDSTIGIWD, GHSDGVKTLYFDDRKLITGSLDKTIRVWN, GHSDSVLSVDSYQKVIVSGSADKTVKVWH, GHTEWVNCVKLHPKSFSCFSCSDDTTIRMWD, GHVGQVQKIIPLTIKDVENLATDNTSDGSSPQDDPTMTD, NEQETVLDENIPYPTHLLSCGLDNTIKLWD, GHVEGVWDIAADNFRIISGSHDGSIKVWD, and DKVAPIACVCIGDSECFSGDEFGCVKMYK. Residues 481 to 495 show a composition bias toward polar residues; it reads ATDNTSDGSSPQDDP. The disordered stretch occupies residues 481–516; sequence ATDNTSDGSSPQDDPTMTDGADESDTPSNEQETVLD.

The protein belongs to the WD repeat MET30/SCONB/SCON-2 family. As to quaternary structure, homomultimer. Interacts with CDC53 and SKP1/CBF3D to form the E3 ubiquitin ligase complex SCF(Met30). Interacts with MET4.

It is found in the cytoplasm. The protein resides in the nucleus. The protein operates within protein modification; protein ubiquitination. Substrate-recognition component of the SCF(Met30) complex, an E3 ubiquitin ligase complex that mediates the ubiquitination and subsequent proteasomal degradation of target proteins. Negatively regulates sulfur amino acids biosynthesis genes expression. Controls cell cycle function (being required for the G1/S transition and M-phase but not the S-phase), sulfur metabolism, and methionine biosynthesis as part of the SCF(Met30) complex. Required for the efficient binding of CDC45 and MCM proteins to origins of replication. Required for efficient expression of G1 cyclins. The SCF(Met30) complex catalyzes ubiquitination and degradation of the Cdk-inhibitory kinase SWE1. Involved in the S-adenosylmethionine (AdoMet)-mediated inhibition of the transcription function of MET4. The SCF(Met30) complex mediates ubiquitination and subsequent degradation of MET4 and the cellular response to cadmium. The SCF(Met30) complex acts as an inhibitor of autophagy by promoting ubiquitination and degradation of ATG9 in normal conditions. The protein is F-box protein MET30 of Saccharomyces cerevisiae (strain ATCC 204508 / S288c) (Baker's yeast).